The chain runs to 118 residues: Na(+)/H(+) antiporter subunit G1 (118 aa).

The next 3 helical transmembrane spans lie at 9 to 29 (LAVI…IGII), 47 to 67 (LGAI…DGYI), and 69 to 89 (MQLI…SHLI).

It belongs to the CPA3 antiporters (TC 2.A.63) subunit G family. May form a heterooligomeric complex that consists of seven subunits: mnhA1, mnhB1, mnhC1, mnhD1, mnhE1, mnhF1 and mnhG1.

Its subcellular location is the cell membrane. Mnh complex is a Na(+)/H(+) antiporter involved in Na(+) excretion. The sequence is that of Na(+)/H(+) antiporter subunit G1 (mnhG1) from Staphylococcus haemolyticus (strain JCSC1435).